The following is a 145-amino-acid chain: MKLNTKHHGTIDYEEKDIINFKRGLPGFEHLKKFIVYSIEENNIFSVLQSLEEENIGIPVLSPFTICSDYEVKLTEEQIKNLKIKSEEEVWVLNTVTINSDYKEITTNLRAPIIINIKERIGEQIILKNEEYKIKYPIFQEENKC.

The protein belongs to the FliW family. As to quaternary structure, interacts with translational regulator CsrA and flagellin(s).

It localises to the cytoplasm. Its function is as follows. Acts as an anti-CsrA protein, binds CsrA and prevents it from repressing translation of its target genes, one of which is flagellin. Binds to flagellin and participates in the assembly of the flagellum. This chain is Flagellar assembly factor FliW, found in Clostridium tetani (strain Massachusetts / E88).